A 451-amino-acid chain; its full sequence is Uronate isomerase (451 aa).

Belongs to the metallo-dependent hydrolases superfamily. Uronate isomerase family.

The enzyme catalyses D-glucuronate = D-fructuronate. It catalyses the reaction aldehydo-D-galacturonate = keto-D-tagaturonate. It participates in carbohydrate metabolism; pentose and glucuronate interconversion. This chain is Uronate isomerase, found in Thermotoga sp. (strain RQ2).